The primary structure comprises 455 residues: Argininosuccinate lyase (455 aa).

Belongs to the lyase 1 family. Argininosuccinate lyase subfamily.

Its subcellular location is the cytoplasm. It catalyses the reaction 2-(N(omega)-L-arginino)succinate = fumarate + L-arginine. Its pathway is amino-acid biosynthesis; L-arginine biosynthesis; L-arginine from L-ornithine and carbamoyl phosphate: step 3/3. In Shewanella denitrificans (strain OS217 / ATCC BAA-1090 / DSM 15013), this protein is Argininosuccinate lyase.